The primary structure comprises 192 residues: dITP/XTP pyrophosphatase (192 aa).

A substrate-binding site is contributed by 7–12 (SNNKNK). Aspartate 68 (proton acceptor) is an active-site residue. Aspartate 68 contributes to the Mg(2+) binding site. Substrate is bound by residues threonine 69, 148–151 (FGYD), lysine 171, and 176–177 (HR).

Belongs to the HAM1 NTPase family. Homodimer. The cofactor is Mg(2+).

The enzyme catalyses XTP + H2O = XMP + diphosphate + H(+). It carries out the reaction dITP + H2O = dIMP + diphosphate + H(+). It catalyses the reaction ITP + H2O = IMP + diphosphate + H(+). Functionally, pyrophosphatase that catalyzes the hydrolysis of nucleoside triphosphates to their monophosphate derivatives, with a high preference for the non-canonical purine nucleotides XTP (xanthosine triphosphate), dITP (deoxyinosine triphosphate) and ITP. Seems to function as a house-cleaning enzyme that removes non-canonical purine nucleotides from the nucleotide pool, thus preventing their incorporation into DNA/RNA and avoiding chromosomal lesions. The chain is dITP/XTP pyrophosphatase from Flavobacterium johnsoniae (strain ATCC 17061 / DSM 2064 / JCM 8514 / BCRC 14874 / CCUG 350202 / NBRC 14942 / NCIMB 11054 / UW101) (Cytophaga johnsonae).